Reading from the N-terminus, the 613-residue chain is Probable inactive purple acid phosphatase 1 (613 aa).

The signal sequence occupies residues 1–24 (MRESLVAILVTVISVLGAIHQVKS). 2 N-linked (GlcNAc...) asparagine glycosylation sites follow: Asn89 and Asn116. Residue Asp295 participates in Fe cation binding. N-linked (GlcNAc...) asparagine glycosylation occurs at Asn316. Residues Asp336 and Tyr339 each contribute to the Fe cation site. Asp336 contributes to the Zn(2+) binding site. 3 residues coordinate Zn(2+): Asn369, His458, and His500. Asn369 is a substrate binding site. 500 to 502 (HAH) serves as a coordination point for substrate. A Fe cation-binding site is contributed by His502. Residues Asn528 and Asn551 are each glycosylated (N-linked (GlcNAc...) asparagine).

This sequence belongs to the metallophosphoesterase superfamily. Purple acid phosphatase family. Homodimer. The cofactor is Fe cation. It depends on Zn(2+) as a cofactor. As to expression, expressed in roots, stems, leaves, flowers and siliques.

The protein resides in the secreted. This is Probable inactive purple acid phosphatase 1 (PAP1) from Arabidopsis thaliana (Mouse-ear cress).